The chain runs to 200 residues: Cytochrome c biogenesis ATP-binding export protein CcmA (200 aa).

Residues L2–L200 form the ABC transporter domain. G34–T41 is a binding site for ATP.

The protein belongs to the ABC transporter superfamily. CcmA exporter (TC 3.A.1.107) family. In terms of assembly, the complex is composed of two ATP-binding proteins (CcmA) and two transmembrane proteins (CcmB).

The protein resides in the cell inner membrane. It catalyses the reaction heme b(in) + ATP + H2O = heme b(out) + ADP + phosphate + H(+). In terms of biological role, part of the ABC transporter complex CcmAB involved in the biogenesis of c-type cytochromes; once thought to export heme, this seems not to be the case, but its exact role is uncertain. Responsible for energy coupling to the transport system. This Legionella pneumophila (strain Lens) protein is Cytochrome c biogenesis ATP-binding export protein CcmA.